A 525-amino-acid chain; its full sequence is MLFLSFHAGSWESWCCCCLIPADRPWDRGQHWQLEMADTRSVHETRFEAAVKVIQSLPKNGSFQPTNEMMLKFYSFYKQATEGPCKLSRPGFWDPIGRYKWDAWSSLGDMTKEEAMSAYVEEMKKIIETMPMTEKVEELLRVIGPFYEIVEDKKSGRSSDITSDLDNVLTSTPNAKTVNGKAESSDSGAESEEEEAQEEVKGAEQSDNDKKMMKKSADHKNLEVIVTNGYDKDGFVQDIQNDIHASSSLNGRSTEEVKPIEENLGQTGKSAVCIHQDINDDHVEDVAGIQHLTSDSDSEVYCDSMEQFGQEESLDSFTSNNGPFQYYLGGHSSQPVENSGFCEDVQVPPGNGNIGNMQVVAVEGKGEVKHGGEDGRNNSGAPHREKRGGESDEFSNVRRGRGHRMQYLSEGTKGRQVGSGGDGERWGSDRGSRGSLNEQIALVLMRLQEDMQNVLQRLQKLETLTALQAKSSTTTLQTTPQPTSQRPSWWPFEMSPGVLTFAIIWPFIARWLVYLYYQRRRRKLN.

An ACB domain is found at 43-132; the sequence is HETRFEAAVK…MKKIIETMPM (90 aa). Residues 54 to 63, 74 to 78, K100, and Y119 each bind an acyl-CoA; these read IQSLPKNGSF and YSFYK. Positions 157 to 216 are disordered; it reads RSSDITSDLDNVLTSTPNAKTVNGKAESSDSGAESEEEEAQEEVKGAEQSDNDKKMMKKS. The span at 158 to 177 shows a compositional bias: polar residues; it reads SSDITSDLDNVLTSTPNAKT. Residues 181–210 are a coiled coil; sequence KAESSDSGAESEEEEAQEEVKGAEQSDNDK. 7 positions are modified to phosphoserine: S184, S185, S187, S191, S206, S270, and S304. Residues 198–216 show a composition bias toward basic and acidic residues; it reads EEVKGAEQSDNDKKMMKKS. The segment covering 367 to 376 has biased composition (basic and acidic residues); it reads EVKHGGEDGR. The disordered stretch occupies residues 367–433; it reads EVKHGGEDGR…ERWGSDRGSR (67 aa). Phosphoserine is present on S419. Positions 422–432 are enriched in basic and acidic residues; the sequence is DGERWGSDRGS. Residues 438–467 adopt a coiled-coil conformation; it reads EQIALVLMRLQEDMQNVLQRLQKLETLTAL. K460 carries the N6-acetyllysine modification. Residues 489 to 509 form a helical membrane-spanning segment; the sequence is WWPFEMSPGVLTFAIIWPFIA.

The protein belongs to the ATG37 family.

It is found in the peroxisome membrane. Functionally, acyl-CoA binding protein which acts as the peroxisome receptor for pexophagy but is dispensable for aggrephagy and nonselective autophagy. Binds medium- and long-chain acyl-CoA esters. The protein is Acyl-CoA-binding domain-containing protein 5 (ACBD5) of Pongo abelii (Sumatran orangutan).